The sequence spans 380 residues: Endopolygalacturonase AN8327 (380 aa).

The first 19 residues, 1–19 (MFYALGPLALFAFATEVMA), serve as a signal peptide directing secretion. Residues 20–35 (TPVAYPMTTASPTLAK) constitute a propeptide that is removed on maturation. Residues Cys-39 and Cys-57 are joined by a disulfide bond. PbH1 repeat units lie at residues 147-169 (LTDS…SING), 170-200 (CDGL…DIGE), 201-222 (SSNV…AVNS), 223-243 (GTSI…SIGS), 252-273 (VDTV…RIKA), 281-303 (IKGV…LIEQ), and 315-338 (TSGI…DSDG). Asp-215 serves as the catalytic Proton donor. A disulfide bridge links Cys-217 with Cys-233. His-237 is a catalytic residue. Residue Asn-327 is glycosylated (N-linked (GlcNAc...) asparagine). Cys-345 and Cys-350 are oxidised to a cystine. Asn-352 is a glycosylation site (N-linked (GlcNAc...) asparagine). Cys-369 and Cys-378 are oxidised to a cystine.

Belongs to the glycosyl hydrolase 28 family.

The protein localises to the secreted. It catalyses the reaction (1,4-alpha-D-galacturonosyl)n+m + H2O = (1,4-alpha-D-galacturonosyl)n + (1,4-alpha-D-galacturonosyl)m.. Involved in maceration and soft-rotting of plant tissue. Hydrolyzes the 1,4-alpha glycosidic bonds of de-esterified pectate in the smooth region of the plant cell wall. The chain is Endopolygalacturonase AN8327 from Emericella nidulans (strain FGSC A4 / ATCC 38163 / CBS 112.46 / NRRL 194 / M139) (Aspergillus nidulans).